Here is a 241-residue protein sequence, read N- to C-terminus: ATP synthase subunit a (241 aa).

The next 5 membrane-spanning stretches (helical) occupy residues 30 to 50 (GQVF…VVVG), 91 to 111 (FIGT…LVPW), 128 to 148 (INTT…AGLS), 193 to 213 (LVVA…VMFL), and 214 to 234 (GLFT…YYIG).

It belongs to the ATPase A chain family. As to quaternary structure, F-type ATPases have 2 components, CF(1) - the catalytic core - and CF(0) - the membrane proton channel. CF(1) has five subunits: alpha(3), beta(3), gamma(1), delta(1), epsilon(1). CF(0) has four main subunits: a, b, b' and c.

The protein localises to the cellular thylakoid membrane. Key component of the proton channel; it plays a direct role in the translocation of protons across the membrane. The sequence is that of ATP synthase subunit a from Prochlorococcus marinus (strain MIT 9313).